The following is an 84-amino-acid chain: Large ribosomal subunit protein bL31 (84 aa).

Zn(2+)-binding residues include cysteine 16, cysteine 18, cysteine 38, and cysteine 41.

The protein belongs to the bacterial ribosomal protein bL31 family. Type A subfamily. As to quaternary structure, part of the 50S ribosomal subunit. Requires Zn(2+) as cofactor.

Functionally, binds the 23S rRNA. In Mycobacterium leprae (strain Br4923), this protein is Large ribosomal subunit protein bL31.